Consider the following 385-residue polypeptide: A-type ATP synthase subunit C (385 aa).

The protein belongs to the V-ATPase V0D/AC39 subunit family. As to quaternary structure, has multiple subunits with at least A(3), B(3), C, D, E, F, H, I and proteolipid K(x).

It is found in the cell membrane. Component of the A-type ATP synthase that produces ATP from ADP in the presence of a proton gradient across the membrane. The protein is A-type ATP synthase subunit C of Methanothermobacter thermautotrophicus (strain ATCC 29096 / DSM 1053 / JCM 10044 / NBRC 100330 / Delta H) (Methanobacterium thermoautotrophicum).